The sequence spans 689 residues: Dipeptidyl aminopeptidase BIII (689 aa).

The signal sequence occupies residues 1-26; that stretch reads MRHPAFRLTLLASTVAFALAPQAAQA. Catalysis depends on charge relay system residues serine 506, aspartate 593, and histidine 625.

This sequence belongs to the peptidase S9C family. As to quaternary structure, monomer.

With respect to regulation, strongly inhibited by the serine protease inhibitor diisopropyl fluorophosphate (DFP), chymostatin, leupeptin, 0.5 mM ZnCl(2), 10 mM o-phenanthlorine and N-tosyl-L-phenyl-alanyl chloromethyl ketone (TPCK), but not by N-tosyl-L-lysyl chloromethyl ketone (TLCK). Activity is not affected significantly by iodoacetate (IAA), L-trans-epoxysuccinyl-leucylamido(4-guanido)butane (E64), pepstatin A and phenylmethanesulfonyl fluoride (PMSF). Activity is stimulated by addition of 0.5 mM CaCl(2), 10 mM EDTA and N-ethylmaleimide (NEM). Functionally, exopeptidase that catalyzes the removal of dipeptide units (NH2-P2-P1- or -P1'-P2'-COOH) from the free amino or carboxy termini. Prefers substrates composed of bulky, hydrophobic amino acids at P1 and P1' positions. Has endopeptidase activity on N-terminally blocked peptide derivatives which contain aromatic amino acid residue at the P1 position. Exopeptidase activity is much higher than its endopeptidase activity. The protein is Dipeptidyl aminopeptidase BIII of Pseudoxanthomonas mexicana.